The following is a 362-amino-acid chain: Acyl-CoA-binding domain-containing protein 3 (362 aa).

The N-terminal stretch at 1–22 (MEVFLEMLLTAVVALLFSFLLA) is a signal peptide. Disordered stretches follow at residues 132-151 (QDEQ…SPEN) and 193-214 (VEKS…EKTE). Residues 192 to 221 (RVEKSSNMVEESDAEAENEEKTELTIEEDD) adopt a coiled-coil conformation. The 88-residue stretch at 231–318 (LEKAFAAAVN…VSKEIPGLTK (88 aa)) folds into the ACB domain. An acyl-CoA is bound by residues 260–264 (FGLHK), Lys-286, and Tyr-305. The tract at residues 329-362 (METSVGLPPNSGSLEDPTNLVTTGVDESSKNGIP) is disordered.

It belongs to the ACBP family. As to expression, expressed in roots, stems, leaves, flowers and siliques.

It localises to the secreted. It is found in the extracellular space. Its function is as follows. Binds medium- and long-chain acyl-CoA esters with very high affinity. Can interact in vitro with arachidonyl-CoA, barely with oleoyl-CoA, but not with palmitoyl-CoA. This Arabidopsis thaliana (Mouse-ear cress) protein is Acyl-CoA-binding domain-containing protein 3 (ACBP3).